Here is a 367-residue protein sequence, read N- to C-terminus: Peptide chain release factor 2 (367 aa).

Position 254 is an N5-methylglutamine (Gln254).

The protein belongs to the prokaryotic/mitochondrial release factor family. Post-translationally, methylated by PrmC. Methylation increases the termination efficiency of RF2.

The protein localises to the cytoplasm. Functionally, peptide chain release factor 2 directs the termination of translation in response to the peptide chain termination codons UGA and UAA. The protein is Peptide chain release factor 2 of Burkholderia cenocepacia (strain ATCC BAA-245 / DSM 16553 / LMG 16656 / NCTC 13227 / J2315 / CF5610) (Burkholderia cepacia (strain J2315)).